The chain runs to 564 residues: Quinone-dependent D-lactate dehydrogenase (564 aa).

An FAD-binding PCMH-type domain is found at 36 to 207 (GTGNALAVVR…TNLQEKRYQV (172 aa)). Residues 70-74 (AANTG), 78-79 (GS), Gly137, Ser144, Gly154, and Val256 contribute to the FAD site.

This sequence belongs to the quinone-dependent D-lactate dehydrogenase family. FAD is required as a cofactor.

The protein localises to the cell inner membrane. It carries out the reaction (R)-lactate + a quinone = a quinol + pyruvate. Functionally, catalyzes the oxidation of D-lactate to pyruvate. In Haemophilus influenzae (strain ATCC 51907 / DSM 11121 / KW20 / Rd), this protein is Quinone-dependent D-lactate dehydrogenase.